A 401-amino-acid chain; its full sequence is Probable tRNA sulfurtransferase (401 aa).

A THUMP domain is found at 60-165 (EEICSLLKNI…EEATFLTIRN (106 aa)). ATP contacts are provided by residues 183-184 (ML), 208-209 (HF), Arg265, Gly287, and Gln296.

The protein belongs to the ThiI family.

Its subcellular location is the cytoplasm. The catalysed reaction is [ThiI sulfur-carrier protein]-S-sulfanyl-L-cysteine + a uridine in tRNA + 2 reduced [2Fe-2S]-[ferredoxin] + ATP + H(+) = [ThiI sulfur-carrier protein]-L-cysteine + a 4-thiouridine in tRNA + 2 oxidized [2Fe-2S]-[ferredoxin] + AMP + diphosphate. The enzyme catalyses [ThiS sulfur-carrier protein]-C-terminal Gly-Gly-AMP + S-sulfanyl-L-cysteinyl-[cysteine desulfurase] + AH2 = [ThiS sulfur-carrier protein]-C-terminal-Gly-aminoethanethioate + L-cysteinyl-[cysteine desulfurase] + A + AMP + 2 H(+). The protein operates within cofactor biosynthesis; thiamine diphosphate biosynthesis. Its function is as follows. Catalyzes the ATP-dependent transfer of a sulfur to tRNA to produce 4-thiouridine in position 8 of tRNAs, which functions as a near-UV photosensor. Also catalyzes the transfer of sulfur to the sulfur carrier protein ThiS, forming ThiS-thiocarboxylate. This is a step in the synthesis of thiazole, in the thiamine biosynthesis pathway. The sulfur is donated as persulfide by IscS. In Bacillus velezensis (strain DSM 23117 / BGSC 10A6 / LMG 26770 / FZB42) (Bacillus amyloliquefaciens subsp. plantarum), this protein is Probable tRNA sulfurtransferase.